Here is a 294-residue protein sequence, read N- to C-terminus: Glucosamine kinase GspK (294 aa).

T12 contributes to the ATP binding site. D101 provides a ligand contact to substrate. Residue T122 participates in ATP binding. Residues 139 to 141 and D146 contribute to the substrate site; that span reads GRE. G202 is a binding site for ATP.

The protein belongs to the eukaryotic-type N-acetylglucosamine kinase family.

The protein localises to the cytoplasm. The catalysed reaction is D-glucosamine + ATP = D-glucosamine 6-phosphate + ADP + H(+). ATP-dependent kinase, which is specific for glucosamine. Does not show kinase activity with any other sugar. In Vibrio cholerae serotype O1 (strain ATCC 39315 / El Tor Inaba N16961), this protein is Glucosamine kinase GspK (gspK).